A 181-amino-acid polypeptide reads, in one-letter code: Cell division protein ZapC (181 aa).

It belongs to the ZapC family. In terms of assembly, interacts directly with FtsZ.

It localises to the cytoplasm. Contributes to the efficiency of the cell division process by stabilizing the polymeric form of the cell division protein FtsZ. Acts by promoting interactions between FtsZ protofilaments and suppressing the GTPase activity of FtsZ. The polypeptide is Cell division protein ZapC (Shewanella woodyi (strain ATCC 51908 / MS32)).